Consider the following 94-residue polypeptide: Small ribosomal subunit protein uS19 (94 aa).

Belongs to the universal ribosomal protein uS19 family.

Its function is as follows. Protein S19 forms a complex with S13 that binds strongly to the 16S ribosomal RNA. The chain is Small ribosomal subunit protein uS19 from Buchnera aphidicola subsp. Cinara cedri (strain Cc).